The chain runs to 931 residues: Neuropilin-2 (931 aa).

A signal peptide spans 1–20; it reads MDMFPLTWVFLALYFSGHEV. Over 21–864 the chain is Extracellular; sequence RSQQDPPCGG…EKSWLYTLDP (844 aa). Cystine bridges form between Cys28–Cys55, Cys83–Cys105, and Cys149–Cys175. CUB domains lie at 28-142 and 149-267; these read CGGR…YEIF and CSKN…YYLI. Asn152 and Asn157 each carry an N-linked (GlcNAc...) asparagine glycan. The Ca(2+) site is built by Glu197, Asp211, and Asp252. A disulfide bond links Cys208 and Cys230. 2 disulfide bridges follow: Cys277–Cys427 and Cys434–Cys592. F5/8 type C domains follow at residues 277–427 and 434–592; these read CNVP…LFGC and CSNM…VLGC. Residues 298 to 310 are compositionally biased toward polar residues; sequence TFSDGRWTPQQSR. The interval 298–317 is disordered; sequence TFSDGRWTPQQSRLHGDDNG. A disordered region spans residues 601–621; sequence VETLGPTVKSEETTTPYPMDE. N-linked (GlcNAc...) asparagine glycosylation occurs at Asn629. Residues 642 to 802 form the MAM domain; that stretch reads SGFNCNFDFP…TDVPLENCME (161 aa). The disordered stretch occupies residues 819-854; it reads THGGEGYEDEIDDEYEGDWSNSSSSTSGAGDPSSGK. Residues 824–835 show a composition bias toward acidic residues; the sequence is GYEDEIDDEYEG. Residues 836-851 are compositionally biased toward low complexity; the sequence is DWSNSSSSTSGAGDPS. A glycan (N-linked (GlcNAc...) asparagine) is linked at Asn839. The chain crosses the membrane as a helical span at residues 865–889; the sequence is ILITIIAMSSLGVLLGATCAGLLLY. Topologically, residues 890–931 are cytoplasmic; sequence CTCSYSGLSSRSCTTLENYNFELYDGLKHKVKINHQKCCSEA.

It belongs to the neuropilin family. Heterodimer with NRP1. Binds PLXNB1. In terms of tissue distribution, expressed in developing CNS, PNS and in some nonneural tissues including limb buds, developing bones, muscles, intestinal epithelium, kidney, lung and submandibular gland.

The protein localises to the membrane. Functionally, high affinity receptor for semaphorins 3C, 3F, VEGF-165 and VEGF-145 isoforms of VEGF, and the PLGF-2 isoform of PGF. This Mus musculus (Mouse) protein is Neuropilin-2 (Nrp2).